A 79-amino-acid polypeptide reads, in one-letter code: Protein NOI4 (79 aa).

The disordered stretch occupies residues 31 to 68 (KARDEKKTGGKPGSPGKSSEGHVKSGGGDPSKPQPKKW). Ser-44 is subject to Phosphoserine.

It belongs to the RIN4 family. In terms of processing, proteolytic cleaved by P.syringae pv tomato AvrRpt2 after Gly-12; this cleavage is critical for subsequent proteasome-dependent elimination.

The sequence is that of Protein NOI4 from Arabidopsis thaliana (Mouse-ear cress).